A 755-amino-acid chain; its full sequence is MEALIPVINKLQDVFNTVGADIIQLPQIVVVGTQSSGKSSVLESLVGRDLLPRGTGVVTRRPLILQLVHVSPEDKRKTTGEENDPATWKNSRHLSKGVEAEEWGKFLHTKNKLYTDFDEIRQEIENETERISGNNKGVSPEPIHLKVFSPNVVNLTLVDLPGMTKVPVGDQPKDIELQIRELILRFISNPNSIILAVTAANTDMATSEALKISREVDPDGRRTLAVITKLDLMDAGTDAMDVLMGRVIPVKLGIIGVVNRSQLDINNKKSVTDSIRDEYAFLQKKYPSLANRNGTKYLARTLNRLLMHHIRDCLPELKTRINVLAAQYQSLLNSYGEPVDDKSATLLQLITKFATEYCNTIEGTAKYIETSELCGGARICYIFHETFGRTLESVDPLGGLNTIDILTAIRNATGPRPALFVPEVSFELLVKRQIKRLEEPSLRCVELVHEEMQRIIQHCSNYSTQELLRFPKLHDAIVEVVTCLLRKRLPVTNEMVHNLVAIELAYINTKHPDFADACGLMNNNIEEQRRNRLARELPSAVSRDKSSKVPSALAPASQEPSPAASAEADGKLIQDNRRETKNVASAGGGIGDGGRIGDGGQEPTTGNWRGMLKTSKAEELLAEEKSKPIPIMPASPQKGHAVNLLDVPVPVARKLSAREQRDCEVIERLIKSYFLIVRKNIQDSVPKAVMHFLVNHVKDTLQSELVGQLYKSSLLDDLLTESEDMAQRRKEAADMLKALQGASQIIAEIRETHLW.

An N-acetylmethionine modification is found at M1. One can recognise a Dynamin-type G domain in the interval 22 to 315; sequence IIQLPQIVVV…LMHHIRDCLP (294 aa). Residues 32–39 form a G1 motif region; the sequence is GTQSSGKS. 32-40 serves as a coordination point for GTP; sequence GTQSSGKSS. The tract at residues 58–60 is G2 motif; that stretch reads VTR. The segment at 159-162 is G3 motif; that stretch reads DLPG. The interval 228 to 231 is G4 motif; the sequence is TKLD. Residues 228-234 and 259-262 each bind GTP; these read TKLDLMD and NRSQ. Residues 258–261 form a G5 motif region; sequence VNRS. Residues 357-502 are middle domain; that stretch reads YCNTIEGTAK…NEMVHNLVAI (146 aa). The tract at residues 461 to 704 is interaction with GSK3B; the sequence is NYSTQELLRF…NHVKDTLQSE (244 aa). Residues 515 to 582 form a b domain region; that stretch reads ADACGLMNNN…IQDNRRETKN (68 aa). Residues 536–610 form a disordered region; sequence ELPSAVSRDK…QEPTTGNWRG (75 aa). The residue at position 542 (S542) is a Phosphoserine. Residues K545 and K548 each participate in a glycyl lysine isopeptide (Lys-Gly) (interchain with G-Cter in SUMO) cross-link. The segment covering 550-567 has biased composition (low complexity); it reads PSALAPASQEPSPAASAE. The residue at position 561 (S561) is a Phosphoserine. Residues 568–581 are compositionally biased toward basic and acidic residues; sequence ADGKLIQDNRRETK. Residues K571 and K581 each participate in a glycyl lysine isopeptide (Lys-Gly) (interchain with G-Cter in SUMO) cross-link. Over residues 586–600 the composition is skewed to gly residues; that stretch reads AGGGIGDGGRIGDGG. 2 O-linked (GlcNAc) threonine glycosylation sites follow: T604 and T605. K613 participates in a covalent cross-link: Glycyl lysine isopeptide (Lys-Gly) (interchain with G-Cter in SUMO). K616 bears the N6-acetyllysine; alternate mark. K616 participates in a covalent cross-link: Glycyl lysine isopeptide (Lys-Gly) (interchain with G-Cter in SUMO); alternate. K625 participates in a covalent cross-link: Glycyl lysine isopeptide (Lys-Gly) (interchain with G-Cter in SUMO). S626 carries the phosphoserine modification. Residue K627 forms a Glycyl lysine isopeptide (Lys-Gly) (interchain with G-Cter in SUMO) linkage. S635 is subject to Phosphoserine; by CDK1. S656 is subject to Phosphoserine; by CAMK1 and PKA. S-nitrosocysteine is present on C663. A GED domain is found at 663–754; the sequence is CEVIERLIKS…IIAEIRETHL (92 aa). The tract at residues 673 to 687 is important for homodimerization; that stretch reads YFLIVRKNIQDSVPK.

Belongs to the TRAFAC class dynamin-like GTPase superfamily. Dynamin/Fzo/YdjA family. In terms of assembly, homotetramer; dimerizes through the N-terminal GTP-middle region of one molecule binding to the GED domain of another DNM1L molecule. Oligomerizes in a GTP-dependent manner to form membrane-associated tubules with a spiral pattern. Interacts with GSK3B and MARCHF5. Interacts (via the GTPase and B domains) with UBE2I; the interaction promotes sumoylation of DNM1L, mainly in its B domain. Interacts with PPP3CA; the interaction dephosphorylates DNM1L and regulates its transition to mitochondria. Interacts with BCL2L1 isoform BCL-X(L) and CLTA; DNM1L and BCL2L1 isoform BCL-X(L) may form a complex in synaptic vesicles that also contains clathrin and MFF. Interacts with MFF; the interaction is inhinited by C11orf65/MFI. Interacts with FIS1. Interacts with MIEF2 and MIEF1; GTP-dependent this regulates GTP hydrolysis and DNM1L oligomerization. Interacts with PGAM5; this interaction leads to dephosphorylation at Ser-656 and activation of GTPase activity and eventually to mitochondria fragmentation. Interacts with RALBP1; during mitosis, recruits DNM1L to the mitochondrion and mediates its activation by the mitotic kinase cyclin B-CDK1. Interacts with FUNDC1; this interaction recruits DNM1L/DRP1 at ER-mitochondria contact sites. Post-translationally, phosphorylation/dephosphorylation events on two sites near the GED domain regulate mitochondrial fission. Phosphorylation on Ser-656 by CAMK1 and PKA inhibits the GTPase activity, leading to a defect in mitochondrial fission promoting mitochondrial elongation. Dephosphorylated on this site by PPP3CA which promotes mitochondrial fission. Phosphorylation on Ser-635 by PINK1 activates the GTPase activity and promotes mitochondrial fission. Phosphorylation on Ser-635 by CDK1 also promotes mitochondrial fission. Phosphorylated in a circadian manner at Ser-656. Dephosphorylated by PGAM5. In terms of processing, sumoylated on various lysine residues within the B domain, probably by MUL1. Sumoylation positively regulates mitochondrial fission. Desumoylated by SENP5 during G2/M transition of mitosis. Appears to be linked to its catalytic activity. S-nitrosylation increases DNM1L dimerization, mitochondrial fission and causes neuronal damage. Post-translationally, O-GlcNAcylation augments the level of the GTP-bound active form of DNM1L and induces translocation from the cytoplasm to mitochondria in cardiomyocytes. It also decreases phosphorylation at Ser-656. In terms of processing, ubiquitination by MARCHF5 affects mitochondrial morphology. As to expression, expressed in all tissues tested (at protein level). Longer isoforms are preferentially expressed in brain.

It localises to the cytoplasm. The protein resides in the cytosol. It is found in the golgi apparatus. The protein localises to the endomembrane system. Its subcellular location is the mitochondrion outer membrane. It localises to the peroxisome. The protein resides in the membrane. It is found in the clathrin-coated pit. The protein localises to the cytoplasmic vesicle. Its subcellular location is the secretory vesicle. It localises to the synaptic vesicle membrane. The catalysed reaction is GTP + H2O = GDP + phosphate + H(+). Functions in mitochondrial and peroxisomal division. Mediates membrane fission through oligomerization into membrane-associated tubular structures that wrap around the scission site to constrict and sever the mitochondrial membrane through a GTP hydrolysis-dependent mechanism. The specific recruitment at scission sites is mediated by membrane receptors like MFF, MIEF1 and MIEF2 for mitochondrial membranes. While the recruitment by the membrane receptors is GTP-dependent, the following hydrolysis of GTP induces the dissociation from the receptors and allows DNM1L filaments to curl into closed rings that are probably sufficient to sever a double membrane. Acts downstream of PINK1 to promote mitochondrial fission in a PRKN-dependent manner. Plays an important role in mitochondrial fission during mitosis. Through its function in mitochondrial division, ensures the survival of at least some types of postmitotic neurons, including Purkinje cells, by suppressing oxidative damage. Required for normal brain development, including that of cerebellum. Facilitates developmentally regulated apoptosis during neural tube formation. Required for a normal rate of cytochrome c release and caspase activation during apoptosis; this requirement may depend upon the cell type and the physiological apoptotic cues. Required for formation of endocytic vesicles. Proposed to regulate synaptic vesicle membrane dynamics through association with BCL2L1 isoform Bcl-X(L) which stimulates its GTPase activity in synaptic vesicles; the function may require its recruitment by MFF to clathrin-containing vesicles. Required for programmed necrosis execution. Rhythmic control of its activity following phosphorylation at Ser-656 is essential for the circadian control of mitochondrial ATP production. This is Dynamin-1-like protein from Rattus norvegicus (Rat).